We begin with the raw amino-acid sequence, 258 residues long: tRNA pseudouridine synthase A (258 aa).

D53 functions as the Nucleophile in the catalytic mechanism. Residue Y111 participates in substrate binding.

It belongs to the tRNA pseudouridine synthase TruA family. As to quaternary structure, homodimer.

The enzyme catalyses uridine(38/39/40) in tRNA = pseudouridine(38/39/40) in tRNA. Functionally, formation of pseudouridine at positions 38, 39 and 40 in the anticodon stem and loop of transfer RNAs. The polypeptide is tRNA pseudouridine synthase A (Streptococcus agalactiae serotype V (strain ATCC BAA-611 / 2603 V/R)).